A 354-amino-acid chain; its full sequence is CCN family member 3 (354 aa).

Residues methionine 1–serine 21 form the signal peptide. Positions alanine 25–proline 99 constitute an IGFBP N-terminal domain. 6 cysteine pairs are disulfide-bonded: cysteine 29–cysteine 55, cysteine 33–cysteine 57, cysteine 37–cysteine 58, cysteine 44–cysteine 61, cysteine 69–cysteine 83, and cysteine 75–cysteine 96. Asparagine 91 carries an N-linked (GlcNAc...) asparagine glycan. In terms of domain architecture, VWFC spans aspartate 102–glycine 168. Residues asparagine 202–glutamate 247 form the TSP type-1 domain. A lipid anchor (S-palmitoyl cysteine) is attached at cysteine 241. Disulfide bonds link cysteine 261-cysteine 298, cysteine 278-cysteine 312, cysteine 289-cysteine 328, cysteine 292-cysteine 330, and cysteine 297-cysteine 334. Residues cysteine 261 to proline 335 enclose the CTCK domain. N-linked (GlcNAc...) asparagine glycosylation occurs at asparagine 277.

This sequence belongs to the CCN family. As to quaternary structure, interacts with FBLN1. Interacts (via CTCK domain) with NOTCH1 (via the EGF-like repeat region). Interacts with GJA1/CX43. Interacts with ITGA5:ITGB1, ITGAV:ITGB3 and ITGAV:ITGB5. Interacts with ZDHHC22; the interaction may lead to CCN3 palmitoylation. In terms of processing, may be palmitoylated on Cys-241, which is important for extracellular secretion. Expressed in large vessels including the ascending aorta, carotid arteries, and the thoracic aorta, in medium-sized vessels such as coronary arteries and small pulmonary veins and also in small vessels. In addition, also found to be present in the heart (at protein level). Expressed in astrocytes (at protein level). Detected in brain, bone, lung and muscle tissues. Expressed in skin, expression highly increases 5 days post-wounding, peaking on the 7th day to decline after 9 days. Expressed in pancreatic ducts and beta-cell islets. Expressed in the brain, in arcuate nucleus ESR1/KISS1 neurons, during lactation (at protein level).

Its subcellular location is the secreted. The protein resides in the cytoplasm. The protein localises to the cell junction. It localises to the gap junction. Immediate-early protein playing a role in various cellular processes including proliferation, adhesion, migration, differentiation and survival. Acts by binding to integrins or membrane receptors such as NOTCH1. Essential regulator of hematopoietic stem and progenitor cell function. Inhibits myogenic differentiation through the activation of Notch-signaling pathway. Inhibits vascular smooth muscle cells proliferation by increasing expression of cell-cycle regulators such as CDKN2B or CDKN1A independently of TGFB1 signaling. Ligand of integrins ITGAV:ITGB3 and ITGA5:ITGB1, acts directly upon endothelial cells to stimulate pro-angiogenic activities and induces angiogenesis. In endothelial cells, supports cell adhesion, induces directed cell migration (chemotaxis) and promotes cell survival. Also plays a role in cutaneous wound healing acting as integrin receptor ligand. Supports skin fibroblast adhesion through ITGA5:ITGB1 and ITGA6:ITGB1 and induces fibroblast chemotaxis through ITGAV:ITGB5. Seems to enhance bFGF-induced DNA synthesis in fibroblasts. Involved in bone regeneration as a negative regulator. Enhances the articular chondrocytic phenotype, whereas it repressed the one representing endochondral ossification. Impairs pancreatic beta-cell function, inhibits beta-cell proliferation and insulin secretion. Plays a role as negative regulator of endothelial pro-inflammatory activation reducing monocyte adhesion, its anti-inflammatory effects occur secondary to the inhibition of NF-kappaB signaling pathway. Contributes to the control and coordination of inflammatory processes in atherosclerosis. Attenuates inflammatory pain through regulation of IL1B- and TNF-induced MMP9, MMP2 and CCL2 expression. Inhibits MMP9 expression through ITGB1 engagement. Brain osteoanabolic hormone. During lactation, maintains the maternal skeleton and viability of offspring. In this context, may act on osteochondral skeletal stem cells. This chain is CCN family member 3 (Ccn3), found in Mus musculus (Mouse).